We begin with the raw amino-acid sequence, 2252 residues long: RNA1 polyprotein (2252 aa).

Over 565-1140 the chain is Cytoplasmic; sequence MITTLAQSIF…QGREFIVSNG (576 aa). Residues 733-899 enclose the SF3 helicase domain; sequence MKDLLELQKR…PGVIFDPDNA (167 aa). 763-770 serves as a coordination point for ATP; it reads GPSHCGKS. A helical membrane pass occupies residues 1141 to 1161; sequence GGILMIAAAIILVLVCGWGFW. The Lumenal portion of the chain corresponds to 1162–1187; that stretch reads KAFVGLFTGSMSLGAALAGCQEAEVK. The Peptidase C3 domain maps to 1213 to 1422; the sequence is SYARSQAGNG…WACILPNPHL (210 aa). Active-site for picornain 3C-like protease activity residues include H1256, E1294, and C1386. Residues 1697 to 1825 form the RdRp catalytic domain; the sequence is NEAINCDYSG…SVSPAVASWF (129 aa).

This sequence belongs to the nepoviruses RNA1 polyprotein family. In terms of processing, specific enzymatic cleavages by picornain 3C-like protease in vivo yield mature proteins. Picornain 3C-like protease is autocatalytically processed. Post-translationally, VPg is uridylylated by the polymerase and is covalently linked to the 5'-end of genomic RNA. This uridylylated form acts as a nucleotide-peptide primer for the polymerase.

It localises to the host endoplasmic reticulum lumen. It is found in the host endoplasmic reticulum membrane. It catalyses the reaction RNA(n) + a ribonucleoside 5'-triphosphate = RNA(n+1) + diphosphate. Its function is as follows. Picornain 3C-like protease is a thiol protease that cleaves the P1 and P2 polyproteins. This chain is RNA1 polyprotein, found in Apium graveolens (Celery).